The sequence spans 243 residues: uncharacterized protein (243 aa).

4 helical membrane-spanning segments follow: residues 38–58, 99–119, 143–163, and 204–224; these read AYFL…VGIF, FGIA…FLGY, FYFS…FLVL, and AFAT…LGLF.

It localises to the cell membrane. This is an uncharacterized protein from Mycoplasma pneumoniae (strain ATCC 29342 / M129 / Subtype 1) (Mycoplasmoides pneumoniae).